We begin with the raw amino-acid sequence, 433 residues long: G-protein coupled receptor 22 (433 aa).

The Extracellular segment spans residues 1 to 45 (MCFSPILEINMQSESNITVRDDIDDINTNMYQPLSYPLSFQVSLT). A glycan (N-linked (GlcNAc...) asparagine) is linked at N16. The helical transmembrane segment at 46–66 (GFLMLEIVLGLGSNLTVLVLY) threads the bilayer. Residues 67–85 (CMKSNLINSVSNIITMNLH) are Cytoplasmic-facing. Residues 86 to 106 (VLDVIICVGCIPLTIVILLLS) form a helical membrane-spanning segment. Residues 107-115 (LESNTALIC) are Extracellular-facing. Residues 116-136 (CFHEACVSFASVSTAINVFAI) form a helical membrane-spanning segment. At 137 to 156 (TLDRYDISVKPANRILTMGR) the chain is on the cytoplasmic side. Residues 157–177 (AVMLMISIWIFSFFSFLIPFI) form a helical membrane-spanning segment. Residues 178-208 (EVNFFSLQSGNTWENKTLLCVSTNEYYTELG) lie on the Extracellular side of the membrane. The N-linked (GlcNAc...) asparagine glycan is linked to N192. A helical transmembrane segment spans residues 209-229 (MYYHLLVQIPIFFFTVVVMLI). The Cytoplasmic segment spans residues 230 to 315 (TYTKILQALN…ERQKRVFRMS (86 aa)). Residues 316 to 336 (LLIISTFLLCWTPISVLNTTI) traverse the membrane as a helical segment. The Extracellular portion of the chain corresponds to 337–349 (LCLGPSDLLVKLR). The helical transmembrane segment at 350–370 (LCFLVMAYGTTIFHPLLYAFT) threads the bilayer. Residues 371–433 (RQKFQKVLKS…KCLVPQVVTD (63 aa)) lie on the Cytoplasmic side of the membrane.

This sequence belongs to the G-protein coupled receptor 1 family. High expression in adult and fetal heart tissue. Expressed in the brain, with enrichment in the accumbens, amygdala, cerebellum, cortex, and hippocampus regions.

The protein localises to the cell membrane. Orphan G-protein coupled receptor. Seems to act through a G(i)/G(o) mediated pathway. May be involved in ciliogenesis. This Homo sapiens (Human) protein is G-protein coupled receptor 22.